We begin with the raw amino-acid sequence, 622 residues long: Cell pattern formation-associated protein stuA (622 aa).

Disordered stretches follow at residues 1-24 and 62-81; these read MASM…QTYA and YPNS…SISS. The 107-residue stretch at 129-235 folds into the HTH APSES-type domain; sequence RVTATLWEDE…QHISNLLYHP (107 aa). Positions 163-184 form a DNA-binding region, H-T-H motif; it reads GTKLLNVAGMTRGRRDGILKSE. Disordered regions lie at residues 239 to 517 and 549 to 622; these read NQRN…TPPR and SNSG…SARR. 3 stretches are compositionally biased toward polar residues: residues 274–283, 302–345, and 355–370; these read LQTPVPSHMS, ASAS…ARSM, and GNNL…QSGY. Low complexity predominate over residues 384–395; the sequence is PQYAPQQPLPQQ. Composition is skewed to polar residues over residues 404 to 421, 455 to 470, 480 to 506, and 549 to 563; these read MPTS…QRGS, SGYN…TNPS, QLTP…NTAP, and SNSG…SMGS. The segment at 565–590 is nuclear localization domain; it reads KRMRDDDDDRIVPPDSRGEFDTKRRK. A compositionally biased stretch (basic and acidic residues) spans 566-586; it reads RMRDDDDDRIVPPDSRGEFDT.

This sequence belongs to the EFG1/PHD1/stuA family.

Its subcellular location is the nucleus. Transcription factor that regulates asexual reproduction. Binds the StuA-response elements (StRE) with the consensus sequence 5'-(A/T)CGCG(T/A)N(A/C)-3' at the promoters of target genes. Required from the very earliest events of asexual reproduction until completion of conidiophore development, but is not specifically required for differentiation of conidia. Represses transcription of the abaA developmental regulatory gene and of the developmentally regulated awh11 gene. Controls the expression of the catalase-peroxidase gene cpeA. Plays an important role in cell wall biogenesis during the development by controlling the transcription level of fksA. This chain is Cell pattern formation-associated protein stuA, found in Emericella nidulans (strain FGSC A4 / ATCC 38163 / CBS 112.46 / NRRL 194 / M139) (Aspergillus nidulans).